Consider the following 33-residue polypeptide: Photosystem II reaction center protein Psb30 (33 aa).

Residues 5–25 (IVFQLTSLVLILAAGPLVVVL) form a helical membrane-spanning segment.

Belongs to the Psb30/Ycf12 family. As to quaternary structure, PSII is composed of 1 copy each of membrane proteins PsbA, PsbB, PsbC, PsbD, PsbE, PsbF, PsbH, PsbI, PsbJ, PsbK, PsbL, PsbM, PsbT, PsbX, PsbY, PsbZ, Psb30/Ycf12, peripheral proteins of the oxygen-evolving complex and a large number of cofactors. It forms dimeric complexes.

It localises to the plastid. Its subcellular location is the chloroplast thylakoid membrane. Its function is as follows. A core subunit of photosystem II (PSII), probably helps stabilize the reaction center. The polypeptide is Photosystem II reaction center protein Psb30 (Tetradesmus obliquus (Green alga)).